Here is a 121-residue protein sequence, read N- to C-terminus: Large ribosomal subunit protein bL12 (121 aa).

It belongs to the bacterial ribosomal protein bL12 family. As to quaternary structure, homodimer. Part of the ribosomal stalk of the 50S ribosomal subunit. Forms a multimeric L10(L12)X complex, where L10 forms an elongated spine to which 2 to 4 L12 dimers bind in a sequential fashion. Binds GTP-bound translation factors.

Its function is as follows. Forms part of the ribosomal stalk which helps the ribosome interact with GTP-bound translation factors. Is thus essential for accurate translation. This chain is Large ribosomal subunit protein bL12, found in Clostridium beijerinckii (strain ATCC 51743 / NCIMB 8052) (Clostridium acetobutylicum).